Consider the following 397-residue polypeptide: Lysophospholipid transporter LplT (397 aa).

At 1-17 (MSESVHTNTSLWSKGMK) the chain is on the periplasmic side. The chain crosses the membrane as a helical span at residues 18–38 (AVIVAQFLSAFGDNALLFATL). Over 39–52 (ALLKAQFYPEWSQP) the chain is Cytoplasmic. The chain crosses the membrane as a helical span at residues 53-73 (ILQMVFVGAYILFAPFVGQVA). The Periplasmic portion of the chain corresponds to 74-90 (DSFAKGRVMMFANGLKL). The chain crosses the membrane as a helical span at residues 91–111 (LGAASICFGINPFLGYTLVGV). The Cytoplasmic portion of the chain corresponds to 112–144 (GAAAYSPAKYGILGELTTGSKLVKANGLMEAST). The chain crosses the membrane as a helical span at residues 145 to 165 (IAAILLGSVAGGVLADWHVLV). Position 166 (Ala-166) is a topological domain, periplasmic. A helical transmembrane segment spans residues 167–187 (LAACALAYGGAVVANIYIPKL). At 188–226 (AAARPGQSWNLINMTRSFLNACTSLWRNGETRFSLVGTS) the chain is on the cytoplasmic side. A helical membrane pass occupies residues 227–247 (LFWGAGVTLRFLLVLWVPVAL). The Periplasmic portion of the chain corresponds to 248–256 (GITDNSTPT). The chain crosses the membrane as a helical span at residues 257 to 277 (YLNAMVAIGIVVGAGAAAKLV). Over 278–280 (TLE) the chain is Cytoplasmic. The chain crosses the membrane as a helical span at residues 281–301 (TVSRCMPAGILIGVVVLIFSL). Residues 302-304 (QHE) are Periplasmic-facing. Residues 305–325 (LLPAYALLMLIGVMGGFFVVP) form a helical membrane-spanning segment. Over 326-343 (LNALLQERGKKSVGAGNA) the chain is Cytoplasmic. The chain crosses the membrane as a helical span at residues 344–364 (IAVQNLGENSAMLLMLGIYSL). At 365 to 366 (AV) the chain is on the periplasmic side. The chain crosses the membrane as a helical span at residues 367–387 (MVGIPVVPIGIGFGALFALAI). The Cytoplasmic segment spans residues 388–397 (TALWIWQRRH).

It belongs to the major facilitator superfamily. LplT (TC 2.A.1.42) family.

The protein resides in the cell inner membrane. Catalyzes the facilitated diffusion of 2-acyl-glycero-3-phosphoethanolamine (2-acyl-GPE) into the cell. In Shigella boydii serotype 4 (strain Sb227), this protein is Lysophospholipid transporter LplT.